Consider the following 454-residue polypeptide: Putative serine carboxypeptidase-like 23 (454 aa).

The first 22 residues, 1–22 (MARIHLIIILLVISSTSSSSSS), serve as a signal peptide directing secretion. Residues Asn-52, Asn-102, and Asn-136 are each glycosylated (N-linked (GlcNAc...) asparagine). 3 disulfides stabilise this stretch: Cys-85–Cys-338, Cys-247–Cys-258, and Cys-282–Cys-306. Ser-178 is an active-site residue. N-linked (GlcNAc...) asparagine glycosylation is found at Asn-287 and Asn-327. Active-site residues include Asp-375 and His-427.

This sequence belongs to the peptidase S10 family. Expression not detected.

It is found in the secreted. Functionally, probable carboxypeptidase. This is Putative serine carboxypeptidase-like 23 (SCPL23) from Arabidopsis thaliana (Mouse-ear cress).